The sequence spans 102 residues: NADH-quinone oxidoreductase subunit K (102 aa).

Helical transmembrane passes span 5-25 (LEHYLTVAAILFTLGIFGIFL), 31-51 (IVILMSIELMLLAVNINLVAF), and 66-86 (FVLTVAAAEAAIGLAILVVFF).

Belongs to the complex I subunit 4L family. As to quaternary structure, NDH-1 is composed of 14 different subunits. Subunits NuoA, H, J, K, L, M, N constitute the membrane sector of the complex.

It localises to the cell inner membrane. It carries out the reaction a quinone + NADH + 5 H(+)(in) = a quinol + NAD(+) + 4 H(+)(out). Its function is as follows. NDH-1 shuttles electrons from NADH, via FMN and iron-sulfur (Fe-S) centers, to quinones in the respiratory chain. The immediate electron acceptor for the enzyme in this species is believed to be ubiquinone. Couples the redox reaction to proton translocation (for every two electrons transferred, four hydrogen ions are translocated across the cytoplasmic membrane), and thus conserves the redox energy in a proton gradient. This is NADH-quinone oxidoreductase subunit K from Parvibaculum lavamentivorans (strain DS-1 / DSM 13023 / NCIMB 13966).